We begin with the raw amino-acid sequence, 84 residues long: Large ribosomal subunit protein bL31B (84 aa).

It belongs to the bacterial ribosomal protein bL31 family. Type B subfamily. Part of the 50S ribosomal subunit.

In Bacteroides thetaiotaomicron (strain ATCC 29148 / DSM 2079 / JCM 5827 / CCUG 10774 / NCTC 10582 / VPI-5482 / E50), this protein is Large ribosomal subunit protein bL31B.